We begin with the raw amino-acid sequence, 835 residues long: Cap-specific mRNA (nucleoside-2'-O-)-methyltransferase 1 (835 aa).

The disordered stretch occupies residues 1–67; it reads MKRRTDPECT…EGKQHSSDSF (67 aa). Residues 2 to 19 carry the Bipartite nuclear localization signal motif; it reads KRRTDPECTAPIKKQKKR. A phosphoserine mark is found at S28, S31, S53, S66, and S91. Positions 37–54 are enriched in polar residues; the sequence is SSVSHGAKASTTSLSGSD. Positions 57-67 are enriched in basic and acidic residues; it reads TEGKQHSSDSF. The G-patch domain occupies 87–133; that stretch reads YNSVSQKLMAKMGFREGEGLGKYSQGRKDIVEASSQKGRRGLGLTLR. K108 carries the post-translational modification N6-acetyllysine. Residues 203-207 and R218 each bind substrate; that span reads KSVFD. The RrmJ-type SAM-dependent 2'-O-MTase domain occupies 231–450; the sequence is FFLNRAAMKM…ERYVVCKGLK (220 aa). N234 contacts S-adenosyl-L-methionine. Residue K239 is part of the active site. S-adenosyl-L-methionine contacts are provided by residues 277–283 and 335–336; these read CAGPGGF and DI. The active site involves D364. Substrate is bound at residue 374 to 376; the sequence is NLQ. Catalysis depends on K404, which acts as the Proton acceptor. Position 439 (N439) interacts with substrate. The tract at residues 727–835 is interaction with POLR2A; sequence SSGTPKLSYT…VLSFIQMHRA (109 aa). The WW domain maps to 752-786; sequence RTVNEPWTMGFSKSFKKKFFYNKKTKDSTFDLPAD.

Interacts with POLR2A (via C-terminus).

The protein resides in the nucleus. It carries out the reaction a 5'-end (N(7)-methyl 5'-triphosphoguanosine)-ribonucleoside in mRNA + S-adenosyl-L-methionine = a 5'-end (N(7)-methyl 5'-triphosphoguanosine)-(2'-O-methyl-ribonucleoside) in mRNA + S-adenosyl-L-homocysteine + H(+). Functionally, S-adenosyl-L-methionine-dependent methyltransferase that mediates mRNA cap1 2'-O-ribose methylation to the 5'-cap structure of mRNAs. Methylates the ribose of the first nucleotide of a m(7)GpppG-capped mRNA and small nuclear RNA (snRNA) to produce m(7)GpppRm (cap1). Displays a preference for cap0 transcripts. Cap1 modification is linked to higher levels of translation. May be involved in the interferon response pathway. The protein is Cap-specific mRNA (nucleoside-2'-O-)-methyltransferase 1 (CMTR1) of Homo sapiens (Human).